We begin with the raw amino-acid sequence, 59 residues long: Mu-conotoxin SrVA (59 aa).

A signal peptide spans 1–22 (MRCLPVFVILLLLIASAPSVDA). The propeptide occupies 23–44 (QLKTKDDVPLASFHDNAKGTQH). Intrachain disulfides connect cysteine 51/cysteine 58 and cysteine 52/cysteine 59.

It belongs to the conotoxin T superfamily. In terms of tissue distribution, expressed by the venom duct.

The protein localises to the secreted. Its function is as follows. Mu-conotoxins block voltage-gated sodium channels. This peptide inhibits the cardiac sodium channel hNav1.5/SCN5A (33% inhibition at 200 nM, 50% at 400 nM, and 55% at 600 nM). Does not interfere with the voltage-dependence of activation, but affects the voltage-dependence of inactivation of hNav1.5. In vivo, intracranial injection into 9-day-old mice causes transient symptoms, including extension of the body and clockwise and counter-clockwise turns, that last 3 to 4 minutes. Intracranial injection into 16-day-old mice, causes transient symptoms, including agitated breathing and occasional turning followed by scratching and grooming behavior, that last for 15-19 minutes. The sequence is that of Mu-conotoxin SrVA from Conus spurius (Alphabet cone).